The sequence spans 272 residues: Glutamate racemase (272 aa).

Residues 9–10 (DS) and 41–42 (YG) each bind substrate. Residue Cys73 is the Proton donor/acceptor of the active site. 74–75 (NT) serves as a coordination point for substrate. Residue Cys183 is the Proton donor/acceptor of the active site. 184–185 (TH) provides a ligand contact to substrate.

The protein belongs to the aspartate/glutamate racemases family.

It catalyses the reaction L-glutamate = D-glutamate. It participates in cell wall biogenesis; peptidoglycan biosynthesis. Provides the (R)-glutamate required for cell wall biosynthesis. The sequence is that of Glutamate racemase from Shewanella sp. (strain MR-7).